The primary structure comprises 294 residues: Homoserine kinase (294 aa).

83–93 (PLARGLGSSAS) contacts ATP.

It belongs to the GHMP kinase family. Homoserine kinase subfamily.

The protein localises to the cytoplasm. The enzyme catalyses L-homoserine + ATP = O-phospho-L-homoserine + ADP + H(+). It participates in amino-acid biosynthesis; L-threonine biosynthesis; L-threonine from L-aspartate: step 4/5. Its function is as follows. Catalyzes the ATP-dependent phosphorylation of L-homoserine to L-homoserine phosphate. This chain is Homoserine kinase, found in Oceanobacillus iheyensis (strain DSM 14371 / CIP 107618 / JCM 11309 / KCTC 3954 / HTE831).